The chain runs to 294 residues: Ventral anterior homeobox 2b (294 aa).

Positions 1–10 (MGDGVSEERS) are enriched in basic and acidic residues. Disordered regions lie at residues 1–27 (MGDGVSEERSPLCGKSATSCSERVRDR), 43–65 (KDIPVTSTSSPGSSKEEVLDSQS), 149–168 (RRTKQKKDQSRDSEKRSSST), 190–223 (PAPPNMISSQNNMGTSSGNGTSLGTSGSTSPVIS), and 272–294 (SSAFEPYTRLDRKDTASGKKSTS). A DNA-binding region (homeobox) is located at residues 98-157 (PKRTRTSFTAEQLYRLELEFQRCQYVVGRERTELARQLNLSETQVKVWFQNRRTKQKKDQ). Over residues 154–165 (KKDQSRDSEKRS) the composition is skewed to basic and acidic residues. Residues 197–219 (SSQNNMGTSSGNGTSLGTSGSTS) are compositionally biased toward low complexity. Over residues 279–288 (TRLDRKDTAS) the composition is skewed to basic and acidic residues.

This sequence belongs to the EMX homeobox family.

It localises to the nucleus. Transcription factor that may function in dorsoventral specification of the forebrain. Regulates the expression of Wnt signaling antagonists. This chain is Ventral anterior homeobox 2b (vax2-b), found in Xenopus laevis (African clawed frog).